The following is a 178-amino-acid chain: Probable chorismate pyruvate-lyase (178 aa).

Arginine 72, leucine 110, and glutamate 169 together coordinate substrate.

Belongs to the UbiC family.

Its subcellular location is the cytoplasm. The catalysed reaction is chorismate = 4-hydroxybenzoate + pyruvate. It functions in the pathway cofactor biosynthesis; ubiquinone biosynthesis. In terms of biological role, removes the pyruvyl group from chorismate, with concomitant aromatization of the ring, to provide 4-hydroxybenzoate (4HB) for the ubiquinone pathway. The sequence is that of Probable chorismate pyruvate-lyase from Nitrosomonas europaea (strain ATCC 19718 / CIP 103999 / KCTC 2705 / NBRC 14298).